The following is a 418-amino-acid chain: L-rhamnose isomerase (418 aa).

Mn(2+) contacts are provided by H262, D294, and D296.

This sequence belongs to the rhamnose isomerase family. It depends on Mn(2+) as a cofactor.

The protein localises to the cytoplasm. The catalysed reaction is L-rhamnopyranose = L-rhamnulose. It participates in carbohydrate degradation; L-rhamnose degradation; glycerone phosphate from L-rhamnose: step 1/3. Functionally, catalyzes the interconversion of L-rhamnose and L-rhamnulose. This Bacteroides thetaiotaomicron (strain ATCC 29148 / DSM 2079 / JCM 5827 / CCUG 10774 / NCTC 10582 / VPI-5482 / E50) protein is L-rhamnose isomerase.